Here is a 547-residue protein sequence, read N- to C-terminus: CTP synthase (547 aa).

The tract at residues 1–265 (MTKFVFVTGG…DRIVCEKLAL (265 aa)) is amidoligase domain. Residue S13 participates in CTP binding. S13 contacts UTP. ATP-binding positions include 14-19 (SLGKGI) and D71. Mg(2+) contacts are provided by D71 and E139. CTP contacts are provided by residues 146–148 (DIE), 186–191 (KTKPTQ), and K222. Residues 186–191 (KTKPTQ) and K222 each bind UTP. Residues 290–542 (TIGMVGKYVD…IKAALAHKHA (253 aa)) form the Glutamine amidotransferase type-1 domain. G351 provides a ligand contact to L-glutamine. The Nucleophile; for glutamine hydrolysis role is filled by C378. L-glutamine contacts are provided by residues 379–382 (LGMQ), E402, and R468. Residues H515 and E517 contribute to the active site.

This sequence belongs to the CTP synthase family. In terms of assembly, homotetramer.

It catalyses the reaction UTP + L-glutamine + ATP + H2O = CTP + L-glutamate + ADP + phosphate + 2 H(+). The catalysed reaction is L-glutamine + H2O = L-glutamate + NH4(+). It carries out the reaction UTP + NH4(+) + ATP = CTP + ADP + phosphate + 2 H(+). It participates in pyrimidine metabolism; CTP biosynthesis via de novo pathway; CTP from UDP: step 2/2. Its activity is regulated as follows. Allosterically activated by GTP, when glutamine is the substrate; GTP has no effect on the reaction when ammonia is the substrate. The allosteric effector GTP functions by stabilizing the protein conformation that binds the tetrahedral intermediate(s) formed during glutamine hydrolysis. Inhibited by the product CTP, via allosteric rather than competitive inhibition. Functionally, catalyzes the ATP-dependent amination of UTP to CTP with either L-glutamine or ammonia as the source of nitrogen. Regulates intracellular CTP levels through interactions with the four ribonucleotide triphosphates. In Janthinobacterium sp. (strain Marseille) (Minibacterium massiliensis), this protein is CTP synthase.